We begin with the raw amino-acid sequence, 209 residues long: Glutathione S-transferase (209 aa).

One can recognise a GST N-terminal domain in the interval 7-91 (FFFFFFFFFS…YLSKKYNISG (85 aa)). Residues 62 to 63 (QV), 75 to 76 (QS), aspartate 109, lysine 121, and threonine 125 contribute to the glutathione site. One can recognise a GST C-terminal domain in the interval 93-209 (GELNEFYADM…YIANRKESVY (117 aa)).

Belongs to the GST superfamily. In terms of assembly, homodimer. In the absence of ligands two homodimers may interact to form a tetramer.

It carries out the reaction RX + glutathione = an S-substituted glutathione + a halide anion + H(+). Conjugation of reduced glutathione to a wide number of exogenous and endogenous hydrophobic electrophiles. May also function as a storage protein or ligandin for parasitotoxic ferriprotoporphyrin IX (hemin). The sequence is that of Glutathione S-transferase from Plasmodium yoelii yoelii.